The chain runs to 338 residues: tRNA (cytidine(56)-2'-O)-methyltransferase (338 aa).

Residues leucine 79 and 105–109 each bind S-adenosyl-L-methionine; that span reads GSEKV. One can recognise an HD domain in the interval 188-295; sequence LINHVKSVKE…VAHADNLFAG (108 aa).

The protein belongs to the aTrm56 family. Homodimer.

The protein localises to the cytoplasm. The catalysed reaction is cytidine(56) in tRNA + S-adenosyl-L-methionine = 2'-O-methylcytidine(56) in tRNA + S-adenosyl-L-homocysteine + H(+). Its function is as follows. Specifically catalyzes the AdoMet-dependent 2'-O-ribose methylation of cytidine at position 56 in tRNAs. The polypeptide is tRNA (cytidine(56)-2'-O)-methyltransferase (Thermoplasma volcanium (strain ATCC 51530 / DSM 4299 / JCM 9571 / NBRC 15438 / GSS1)).